Here is a 337-residue protein sequence, read N- to C-terminus: Calcium-binding protein 39-like (337 aa).

The protein belongs to the Mo25 family. Component of a trimeric complex composed of STK11/LKB1, STRAD (STRADA or STRADB) and CAB39/MO25 (CAB39/MO25alpha or CAB39L/MO25beta): the complex tethers STK11/LKB1 in the cytoplasm and stimulates its catalytic activity.

Its function is as follows. Component of a complex that binds and activates STK11/LKB1. In the complex, required to stabilize the interaction between CAB39/MO25 (CAB39/MO25alpha or CAB39L/MO25beta) and STK11/LKB1. The sequence is that of Calcium-binding protein 39-like (CAB39L) from Homo sapiens (Human).